The sequence spans 37 residues: Large ribosomal subunit protein bL36 (37 aa).

It belongs to the bacterial ribosomal protein bL36 family.

The chain is Large ribosomal subunit protein bL36 from Endomicrobium trichonymphae.